Reading from the N-terminus, the 304-residue chain is Dihydroorotate dehydrogenase B (NAD(+)), catalytic subunit (304 aa).

FMN is bound by residues Ser-21 and 45–46 (KA). Residues Lys-45 and 69 to 73 (NAIGL) contribute to the substrate site. Residues Asn-99 and Asn-127 each coordinate FMN. Asn-127 provides a ligand contact to substrate. The active-site Nucleophile is Cys-130. Residues Lys-165 and Ile-191 each coordinate FMN. 192–193 (NT) provides a ligand contact to substrate. FMN is bound by residues Gly-217, 243 to 244 (GG), and 265 to 266 (GT).

It belongs to the dihydroorotate dehydrogenase family. Type 1 subfamily. In terms of assembly, heterotetramer of 2 PyrK and 2 PyrD type B subunits. FMN serves as cofactor.

It is found in the cytoplasm. The enzyme catalyses (S)-dihydroorotate + NAD(+) = orotate + NADH + H(+). It functions in the pathway pyrimidine metabolism; UMP biosynthesis via de novo pathway; orotate from (S)-dihydroorotate (NAD(+) route): step 1/1. Catalyzes the conversion of dihydroorotate to orotate with NAD(+) as electron acceptor. The protein is Dihydroorotate dehydrogenase B (NAD(+)), catalytic subunit (pyrD) of Listeria monocytogenes serotype 4b (strain CLIP80459).